The sequence spans 681 residues: DNA ligase (681 aa).

Residues 45–49 (DFDFD), 94–95 (SL), and E120 contribute to the NAD(+) site. Catalysis depends on K122, which acts as the N6-AMP-lysine intermediate. Residues R143, E177, K289, and K313 each contribute to the NAD(+) site. Zn(2+)-binding residues include C403, C406, C421, and C426. The BRCT domain maps to 593–681 (ADQQPFAGQS…SLKIDFKNLI (89 aa)).

This sequence belongs to the NAD-dependent DNA ligase family. LigA subfamily. Mg(2+) serves as cofactor. It depends on Mn(2+) as a cofactor.

The enzyme catalyses NAD(+) + (deoxyribonucleotide)n-3'-hydroxyl + 5'-phospho-(deoxyribonucleotide)m = (deoxyribonucleotide)n+m + AMP + beta-nicotinamide D-nucleotide.. Functionally, DNA ligase that catalyzes the formation of phosphodiester linkages between 5'-phosphoryl and 3'-hydroxyl groups in double-stranded DNA using NAD as a coenzyme and as the energy source for the reaction. It is essential for DNA replication and repair of damaged DNA. The protein is DNA ligase of Leptospira interrogans serogroup Icterohaemorrhagiae serovar Lai (strain 56601).